A 776-amino-acid polypeptide reads, in one-letter code: Microtubule-associated protein tau (776 aa).

Basic and acidic residues predominate over residues 1–26 (MAEPRQEFEVMEDHAGTYGLGDRKDQ). The interval 1–591 (MAEPRQEFEV…PVPMPDLKNV (591 aa)) is disordered. Position 2 is an N-acetylalanine (Ala-2). A phosphotyrosine mark is found at Tyr-18 and Tyr-29. Lys-44 is covalently cross-linked (Glycyl lysine isopeptide (Lys-Gly) (interchain with G-Cter in ubiquitin)). Phosphoserine occurs at positions 46 and 61. Residues 61–71 (SETSDAKSTPT) show a composition bias toward polar residues. 3 positions are modified to phosphothreonine: Thr-69, Thr-71, and Thr-111. Basic and acidic residues-rich tracts occupy residues 179–189 (EGGRHAPELLK) and 207–216 (GGKERPGSKE). Ser-214 is modified (phosphoserine). Over residues 217-228 (EVDEDRDVDESS) the composition is skewed to acidic residues. Composition is skewed to basic and acidic residues over residues 293 to 303 (KGQDAHLEFTF) and 314 to 323 (EQAHSEEHLG). Residues 324-340 (RAAFPGAPGEGPEARGP) are compositionally biased toward low complexity. Composition is skewed to basic and acidic residues over residues 344-356 (EDTKEADLPEPSE) and 381-393 (KSKDGTGSDDKKA). Positions 440–452 (KYVSSVTPRTGSS) are enriched in polar residues. Basic and acidic residues predominate over residues 455–466 (KEMKLKGADGKT). The residue at position 470 (Thr-470) is a Phosphothreonine. Arg-472 bears the Omega-N-methylarginine mark. Lys-480 is modified (N6,N6-dimethyllysine; alternate). N6-acetyllysine; alternate is present on Lys-480. Residues Thr-486, Thr-492, and Thr-498 each carry the phosphothreonine modification. Phosphoserine is present on residues Ser-502, Ser-526, and Ser-530. Positions 517 to 528 (RSERGEPPKSGD) are enriched in basic and acidic residues. Low complexity predominate over residues 529 to 549 (RSGYSSPGSPGTPGSRSRTPS). At Tyr-532 the chain carries Phosphotyrosine. A phosphoserine mark is found at Ser-533, Ser-534, and Ser-537. A phosphothreonine mark is found at Thr-540 and Thr-547. A Phosphoserine modification is found at Ser-549. The residue at position 552 (Thr-552) is a Phosphothreonine. N6-acetyllysine is present on Lys-560. Residue Thr-566 is modified to Phosphothreonine. 2 positions are modified to phosphoserine: Ser-570 and Ser-572. 4 Tau/MAP repeats span residues 579-609 (QTAPVPMPDLKNVKSKIGSTENLKHQPGGGK), 610-640 (VQIINKKLDLSNVQSKCGSKDNIKHVPGGGS), 641-671 (VQIVYKPVDLSKVTSKCGSLGNIHHKPGGGQ), and 672-703 (VEVKSEKLDFKDRVQSKIGSLDNITHVPGGGN). Residue Lys-589 forms a Glycyl lysine isopeptide (Lys-Gly) (interchain with G-Cter in ubiquitin) linkage. The residue at position 594 (Lys-594) is an N6-acetyllysine; alternate. At Lys-594 the chain carries N6-methyllysine; alternate. A Glycyl lysine isopeptide (Lys-Gly) (interchain with G-Cter in ubiquitin); alternate cross-link involves residue Lys-594. Ser-597 is modified (phosphoserine). A Glycyl lysine isopeptide (Lys-Gly) (interchain with G-Cter in ubiquitin) cross-link involves residue Lys-602. N6-acetyllysine; alternate is present on Lys-616. Lys-616 is covalently cross-linked (Glycyl lysine isopeptide (Lys-Gly) (interchain with G-Cter in ubiquitin); alternate). Phosphoserine is present on residues Ser-620 and Ser-624. Lys-625 is modified (N6-acetyllysine). The residue at position 628 (Ser-628) is a Phosphoserine. Lys-633 carries the post-translational modification N6-acetyllysine; alternate. Lys-633 is covalently cross-linked (Glycyl lysine isopeptide (Lys-Gly) (interchain with G-Cter in ubiquitin); alternate). Ser-640 carries the post-translational modification Phosphoserine. Position 646 is an N6,N6-dimethyllysine; alternate (Lys-646). N6-acetyllysine; alternate is present on residues Lys-646, Lys-652, and Lys-656. Glycyl lysine isopeptide (Lys-Gly) (interchain with G-Cter in ubiquitin); alternate cross-links involve residues Lys-646, Lys-652, and Lys-656. Ser-659 carries the phosphoserine modification. Residues Lys-666, Lys-678, and Lys-682 each carry the N6-acetyllysine; alternate modification. Residues Lys-666, Lys-678, and Lys-682 each participate in a glycyl lysine isopeptide (Lys-Gly) (interchain with G-Cter in ubiquitin); alternate cross-link. An Omega-N-methylarginine modification is found at Arg-684. Ser-687 carries the phosphoserine modification. A Glycyl lysine isopeptide (Lys-Gly) (interchain with G-Cter in ubiquitin) cross-link involves residue Lys-688. Phosphoserine is present on Ser-691. The residue at position 704 (Lys-704) is an N6-acetyllysine; alternate. Lys-704 is covalently cross-linked (Glycyl lysine isopeptide (Lys-Gly) (interchain with G-Cter in ubiquitin); alternate). Residue Lys-710 forms a Glycyl lysine isopeptide (Lys-Gly) (interchain with G-Cter in ubiquitin) linkage. An N6-acetyllysine; alternate modification is found at Lys-720. Lys-720 is covalently cross-linked (Glycyl lysine isopeptide (Lys-Gly) (interchain with G-Cter in ubiquitin); alternate). Tyr-729 is subject to Phosphotyrosine. Phosphoserine occurs at positions 731 and 735. The interval 733–752 (VVSGDTSPRHLSNVSSTGSI) is disordered. A compositionally biased stretch (polar residues) spans 736–751 (GDTSPRHLSNVSSTGS). Position 738 is a phosphothreonine (Thr-738). 4 positions are modified to phosphoserine: Ser-739, Ser-744, Ser-751, and Ser-757. At Thr-762 the chain carries Phosphothreonine.

As to quaternary structure, interacts with MARK1, MARK2, MARK3 and MARK4. Interacts with SQSTM1 when polyubiquitinated. Interacts with PSMC2 through SQSTM1. Interacts with FKBP4. Binds to CSNK1D. Interacts with SGK1. Interacts with EPM2A; the interaction dephosphorylates MAPT at Ser-396. Interacts with PIN1. Interacts with LRRK2. Interacts with LRP1, leading to endocytosis; this interaction is reduced in the presence of LRPAP1/RAP. In terms of processing, polyubiquitinated. Requires functional TRAF6 and may provoke SQSTM1-dependent degradation by the proteasome. Phosphorylation at various serine and threonine residues in S-P or T-P motifs by proline-directed protein kinases (PDPK1, CDK1, CDK5, GSK3, MAPK) (a few sites per protein in interphase, more in mitosis), and at serine residues in K-X-G-S motifs by MAP/microtubule affinity-regulating kinase (MARK1, MARK2, MARK3 or MARK4), causing detachment from microtubules, and their disassembly. Phosphorylation at Ser-597 by BRSK1 and BRSK2 in neurons affects ability to bind microtubules and plays a role in neuron polarization. Phosphorylated by PHK. Dephosphorylation at several serine and threonine residues by the serine/threonine phosphatase PPP5C. Phosphorylation at Ser-214 by SGK1 mediates microtubule depolymerization and neurite formation in hippocampal neurons.

It is found in the cytoplasm. The protein resides in the cytosol. It localises to the cell membrane. The protein localises to the cytoskeleton. Its subcellular location is the cell projection. It is found in the axon. The protein resides in the dendrite. Functionally, promotes microtubule assembly and stability, and might be involved in the establishment and maintenance of neuronal polarity. The C-terminus binds axonal microtubules while the N-terminus binds neural plasma membrane components, suggesting that tau functions as a linker protein between both. Axonal polarity is predetermined by tau localization (in the neuronal cell) in the domain of the cell body defined by the centrosome. The short isoforms allow plasticity of the cytoskeleton whereas the longer isoforms may preferentially play a role in its stabilization. This Pan troglodytes (Chimpanzee) protein is Microtubule-associated protein tau (MAPT).